A 522-amino-acid chain; its full sequence is Flavin-dependent halogenase armH1 (522 aa).

FAD is bound by residues Gly-16, Ala-19, and Glu-49. Chloride-binding residues include Ser-328 and Gly-329. An FAD-binding site is contributed by Ile-330.

This sequence belongs to the flavin-dependent halogenase family.

It carries out the reaction melleolide F + FADH2 + chloride + O2 = 6'-chloromelleolide F + FAD + 2 H2O + H(+). Its function is as follows. Flavin-dependent halogenase involved in the biosynthesis of melleolides, a range of antifungal and phytotoxic polyketide derivatives composed of an orsellinic acid (OA) moiety esterified to various sesquiterpene alcohols. The halogenase catalyzes the transfer of a single chlorine atom to the melleolide backbone, resulting in a 6'-chloromelleolide product. The enzyme acts on free substrate and does not depend on carrier-protein-dependent acceptor molecules. The chain is Flavin-dependent halogenase armH1 from Armillaria mellea (Honey mushroom).